A 307-amino-acid chain; its full sequence is Bifunctional protein FolD (307 aa).

Residues 170-172, Ser-195, and Ile-236 each bind NADP(+); that span reads GRS.

It belongs to the tetrahydrofolate dehydrogenase/cyclohydrolase family. Homodimer.

It catalyses the reaction (6R)-5,10-methylene-5,6,7,8-tetrahydrofolate + NADP(+) = (6R)-5,10-methenyltetrahydrofolate + NADPH. It carries out the reaction (6R)-5,10-methenyltetrahydrofolate + H2O = (6R)-10-formyltetrahydrofolate + H(+). It participates in one-carbon metabolism; tetrahydrofolate interconversion. In terms of biological role, catalyzes the oxidation of 5,10-methylenetetrahydrofolate to 5,10-methenyltetrahydrofolate and then the hydrolysis of 5,10-methenyltetrahydrofolate to 10-formyltetrahydrofolate. This is Bifunctional protein FolD from Sinorhizobium fredii (strain NBRC 101917 / NGR234).